The chain runs to 56 residues: MTQVTVGENEGIESALRRFKRQVSKAGIFADLKRLRHHETPIEKYKRKAQQRRRRR.

This sequence belongs to the bacterial ribosomal protein bS21 family.

The chain is Small ribosomal subunit protein bS21 from Synechococcus sp. (strain WH7803).